Consider the following 142-residue polypeptide: Mitochondrial import inner membrane translocase subunit TIM22-4 (142 aa).

4 helical membrane-spanning segments follow: residues 21 to 41 (VTSG…LGAL), 70 to 88 (SCKT…ECIV), 97 to 113 (TVNT…SMSA), and 120 to 137 (ACIG…IEKF).

Belongs to the Tim17/Tim22/Tim23 family.

The protein localises to the mitochondrion inner membrane. Its function is as follows. Essential core component of the TIM22 complex, a complex that mediates the import and insertion of multi-pass transmembrane proteins into the mitochondrial inner membrane. The chain is Mitochondrial import inner membrane translocase subunit TIM22-4 (TIM22-4) from Arabidopsis thaliana (Mouse-ear cress).